The following is a 457-amino-acid chain: Glycine receptor subunit alpha-1 (457 aa).

The signal sequence occupies residues Met-1–Ala-28. Residues Ala-29–Tyr-250 are Extracellular-facing. A glycan (N-linked (GlcNAc...) asparagine) is linked at Asn-66. Residues Arg-93 and Ser-157 each coordinate glycine. Cysteines 166 and 180 form a disulfide. The Zn(2+) site is built by Glu-220 and Asp-222. Cys-226 and Cys-237 are joined by a disulfide. Strychnine is bound at residue Tyr-230 to Phe-235. Position 232 (Thr-232) interacts with glycine. Position 243 (His-243) interacts with Zn(2+). The helical transmembrane segment at Tyr-251–Ile-272 threads the bilayer. The Cytoplasmic portion of the chain corresponds to Asn-273 to Ala-277. A helical transmembrane segment spans residues Pro-278–Ser-298. Residues Arg-299–Lys-309 lie on the Extracellular side of the membrane. A helical transmembrane segment spans residues Ala-310–Ala-330. Residues Ala-331–Lys-425 lie on the Cytoplasmic side of the membrane. The segment at Lys-391–Glu-410 is disordered. Residues Ile-426 to Tyr-446 traverse the membrane as a helical segment. The Extracellular segment spans residues Lys-447–Gln-457.

The protein belongs to the ligand-gated ion channel (TC 1.A.9) family. Glycine receptor (TC 1.A.9.3) subfamily. GLRA1 sub-subfamily. In terms of assembly, interacts with GLRB to form heteropentameric channels; this is probably the predominant form in vivo. Heteropentamer composed of four GLRA1 subunits and one GLRB subunit. Heteropentamer composed of two GLRA1 and three GLRB. Heteropentamer composed of three GLRA1 and two GLRB. Homopentamer (in vitro). Both homopentamers and heteropentamers form functional ion channels, but their characteristics are subtly different. Detected on spinal cord neurons (at protein level). Detected in spinal cord.

The protein resides in the postsynaptic cell membrane. The protein localises to the synapse. Its subcellular location is the perikaryon. It localises to the cell projection. It is found in the dendrite. The protein resides in the cell membrane. The catalysed reaction is chloride(in) = chloride(out). Its activity is regulated as follows. Channel opening is triggered by extracellular glycine. Channel characteristics depend on the subunit composition; heteropentameric channels are activated by lower glycine levels and display faster desensitization. Subunit of heteromeric glycine-gated chloride channels. Plays an important role in the down-regulation of neuronal excitability. Contributes to the generation of inhibitory postsynaptic currents. Channel activity is potentiated by ethanol. Potentiation of channel activity by intoxicating levels of ethanol contribute to the sedative effects of ethanol. The protein is Glycine receptor subunit alpha-1 (GLRA1) of Bos taurus (Bovine).